Reading from the N-terminus, the 280-residue chain is MHLTKTWLAQLPLTDIQQVQPVSGGDINAAFQIITRHHQYFLKVQPHNDVTFFDHEVAGLRLLGAVTKTPRVIASGTIATDGYLLLDWLATGTGSQSALGAAVAKVHHQHHAQFGLDHDFTAGKLPKINHWQTDWATFYTQQRLDVLVNLAKEHHLWSETREMHYHRLRQQLLQDSHMHTVKPSLLHGDLWSGNYLFDTTGTPVLIDPDVFYGDREMDLAMTTIFGGFDTDFYQAYQAAYPVAPGMQDRLPSYQLYYLLAHLNLFGETYGPAVDRILMQY.

Residue 87 to 89 coordinates ATP; it reads DWL. The Proton acceptor role is filled by Asp-189.

The protein belongs to the fructosamine kinase family.

The enzyme catalyses N(6)-(D-ribulosyl)-L-lysine + ATP = N(6)-(3-O-phospho-D-ribulosyl)-L-lysine + ADP + H(+). It catalyses the reaction N-(D-ribulosyl)-cadaverine + ATP = N-(3-O-phospho-D-ribulosyl)-cadaverine + ADP + H(+). It carries out the reaction N(6)-(D-erythrulosyl)-L-lysine + ATP = N(6)-(3-O-phospho-D-erythrulosyl)-L-lysine + ADP + H(+). The catalysed reaction is N-(D-erythrulosyl)-cadaverine + ATP = N-(3-O-phospho-D-erythrulosyl)-cadaverine + ADP + H(+). The enzyme catalyses N(6)-D-ribulosyl-L-lysyl-[protein] + ATP = N(6)-(3-O-phospho-D-ribulosyl)-L-lysyl-[protein] + ADP + H(+). It catalyses the reaction N(6)-(D-erythrulosyl)-L-lysyl-[protein] + ATP = N(6)-(3-O-phospho-D-erythrulosyl)-L-lysyl-[protein] + ADP + H(+). Its function is as follows. Ketoamine kinase that phosphorylates ketoamines, such as erythruloselysine, erythrulosecadaverine, ribuloselysine and ribulosecadaverine, on the third carbon of the sugar moiety to generate ketoamine 3-phosphate. Has higher activity on free lysine (erythruloselysine and ribuloselysine), than on ribuloselysine and erythruloselysine residues on glycated proteins. The sequence is that of Probable ketoamine kinase lp_1983 from Lactiplantibacillus plantarum (strain ATCC BAA-793 / NCIMB 8826 / WCFS1) (Lactobacillus plantarum).